The sequence spans 160 residues: GTP-dependent dephospho-CoA kinase (160 aa).

The GTP site is built by Asp45, Ile46, Val47, Asp59, Lys61, Glu108, and Asp130.

This sequence belongs to the GTP-dependent DPCK family.

It carries out the reaction 3'-dephospho-CoA + GTP = GDP + CoA + H(+). It participates in cofactor biosynthesis; coenzyme A biosynthesis. In terms of biological role, catalyzes the GTP-dependent phosphorylation of the 3'-hydroxyl group of dephosphocoenzyme A to form coenzyme A (CoA). The polypeptide is GTP-dependent dephospho-CoA kinase (Staphylothermus marinus (strain ATCC 43588 / DSM 3639 / JCM 9404 / F1)).